A 352-amino-acid chain; its full sequence is Quinolinate synthase (352 aa).

Residues His48 and Ser69 each contribute to the iminosuccinate site. Residue Cys114 coordinates [4Fe-4S] cluster. Iminosuccinate contacts are provided by residues 140-142 (YAN) and Ser157. Cys201 provides a ligand contact to [4Fe-4S] cluster. Iminosuccinate contacts are provided by residues 227–229 (HPE) and Thr244. Cys298 is a [4Fe-4S] cluster binding site.

The protein belongs to the quinolinate synthase family. Type 1 subfamily. [4Fe-4S] cluster serves as cofactor.

The protein resides in the cytoplasm. The catalysed reaction is iminosuccinate + dihydroxyacetone phosphate = quinolinate + phosphate + 2 H2O + H(+). It functions in the pathway cofactor biosynthesis; NAD(+) biosynthesis; quinolinate from iminoaspartate: step 1/1. In terms of biological role, catalyzes the condensation of iminoaspartate with dihydroxyacetone phosphate to form quinolinate. This Pseudomonas putida (strain ATCC 700007 / DSM 6899 / JCM 31910 / BCRC 17059 / LMG 24140 / F1) protein is Quinolinate synthase.